A 1128-amino-acid chain; its full sequence is Lysylphosphatidylglycerol biosynthesis bifunctional protein LysX (1128 aa).

The tract at residues 1–47 (MDNPPPTGVAPRHLPPGSVHTGKVTASLSHRRPDSVQDAPPAPVPHR) is disordered. The interval 1–632 (MDNPPPTGVA…GLHADGSPPD (632 aa)) is phosphatidylglycerol lysyltransferase. 6 helical membrane-spanning segments follow: residues 55–75 (VPHIAGLVLGVFAVACLLWSL), 97–117 (APDTNVMWALIVGLLAGAIAS), 121–141 (IAWWLLVGYLTLFAVANGLRF), 147–167 (INALVAMIVQVGVVGLLIAAW), 184–204 (GVLVGGLAIGCLLGWGLVEVF), and 240–260 (FVNVLLGLFGAIALLAAVLTL). Positions 619–644 (DTLTGLHADGSPPDWPKPDLLDSGPR) are disordered. The interval 633-1128 (WPKPDLLDSG…TLPFPLVKPR (496 aa)) is lysine--tRNA ligase. The segment covering 634-644 (PKPDLLDSGPR) has biased composition (basic and acidic residues). Mg(2+)-binding residues include Asp-1040 and Glu-1047.

It in the N-terminal section; belongs to the LPG synthetase family. In the C-terminal section; belongs to the class-II aminoacyl-tRNA synthetase family. Mg(2+) is required as a cofactor.

Its subcellular location is the cell membrane. The enzyme catalyses tRNA(Lys) + L-lysine + ATP = L-lysyl-tRNA(Lys) + AMP + diphosphate. It catalyses the reaction L-lysyl-tRNA(Lys) + a 1,2-diacyl-sn-glycero-3-phospho-(1'-sn-glycerol) = a 1,2-diacyl-sn-glycero-3-phospho-1'-(3'-O-L-lysyl)-sn-glycerol + tRNA(Lys). Catalyzes the production of L-lysyl-tRNA(Lys)transfer and the transfer of a lysyl group from L-lysyl-tRNA(Lys) to membrane-bound phosphatidylglycerol (PG), which produces lysylphosphatidylglycerol (LPG), one of the components of the bacterial membrane with a positive net charge. LPG synthesis contributes to the resistance to cationic antimicrobial peptides (CAMPs) and likely protects M.tuberculosis against the CAMPs produced by competiting microorganisms (bacteriocins). In fact, the modification of anionic phosphatidylglycerol with positively charged L-lysine results in repulsion of the peptides. This is Lysylphosphatidylglycerol biosynthesis bifunctional protein LysX (lysX) from Nocardia farcinica (strain IFM 10152).